The following is a 177-amino-acid chain: Large ribosomal subunit protein uL6 (177 aa).

It belongs to the universal ribosomal protein uL6 family. As to quaternary structure, part of the 50S ribosomal subunit.

This protein binds to the 23S rRNA, and is important in its secondary structure. It is located near the subunit interface in the base of the L7/L12 stalk, and near the tRNA binding site of the peptidyltransferase center. This Natronomonas pharaonis (strain ATCC 35678 / DSM 2160 / CIP 103997 / JCM 8858 / NBRC 14720 / NCIMB 2260 / Gabara) (Halobacterium pharaonis) protein is Large ribosomal subunit protein uL6.